The chain runs to 1450 residues: Protein clueless (1450 aa).

2 disordered regions span residues Met-1–Glu-126 and Lys-266–Pro-287. Residues Asn-29–Pro-60 show a composition bias toward low complexity. A compositionally biased stretch (basic residues) spans Ala-62–Asn-71. Phosphoserine is present on Ser-271. A Clu domain is found at Arg-425–Leu-667. 2 stretches are compositionally biased toward basic and acidic residues: residues Lys-725–Ala-734 and Lys-743–Gln-765. Disordered stretches follow at residues Lys-725–Ala-775 and Pro-959–Thr-1011. A compositionally biased stretch (basic residues) spans Lys-968 to Gly-983. Low complexity predominate over residues Asn-984–Ser-1008. TPR repeat units follow at residues Ala-1102–Val-1135, Ala-1228–Tyr-1261, and Gly-1263–Thr-1296. The tract at residues Asn-1410–Ser-1450 is disordered. A compositionally biased stretch (basic and acidic residues) spans Ala-1417–Asp-1428.

The protein belongs to the CLU family.

It is found in the cytoplasm. In terms of biological role, mRNA-binding protein involved in proper cytoplasmic distribution of mitochondria. This is Protein clueless from Drosophila ananassae (Fruit fly).